The following is a 156-amino-acid chain: MAKTIYVLNGPNLNMLGTREPDTYGHANLADVEQLCAETAKNFGLAADCRQSNREGELIDFIHEAHAKNAAGIVINAGGYSHTSIALHDALVAVKIPTVEVHISNIHAREDFRHHSFTAKAAFASLSGFGIDGYRLAINGLAAKIGAVDPSNKVKS.

Tyr-24 (proton acceptor) is an active-site residue. Substrate is bound by residues Asn-76, His-82, and Asp-89. His-102 (proton donor) is an active-site residue. Residues 103–104 (IS) and Arg-113 each bind substrate.

The protein belongs to the type-II 3-dehydroquinase family. As to quaternary structure, homododecamer.

It catalyses the reaction 3-dehydroquinate = 3-dehydroshikimate + H2O. Its pathway is metabolic intermediate biosynthesis; chorismate biosynthesis; chorismate from D-erythrose 4-phosphate and phosphoenolpyruvate: step 3/7. Functionally, catalyzes a trans-dehydration via an enolate intermediate. The protein is 3-dehydroquinate dehydratase of Nitrobacter winogradskyi (strain ATCC 25391 / DSM 10237 / CIP 104748 / NCIMB 11846 / Nb-255).